Reading from the N-terminus, the 233-residue chain is Peptidyl-tRNA hydrolase (233 aa).

Tyr-14 is a binding site for tRNA. The Proton acceptor role is filled by His-19. Positions 64, 66, and 112 each coordinate tRNA. A disordered region spans residues 187–233; the sequence is VSPRRSGTGQKGKDKPPAPAKQQATATKAEPEPDTRSALQKLMERFK.

The protein belongs to the PTH family. Monomer.

The protein localises to the cytoplasm. It catalyses the reaction an N-acyl-L-alpha-aminoacyl-tRNA + H2O = an N-acyl-L-amino acid + a tRNA + H(+). Its function is as follows. Hydrolyzes ribosome-free peptidyl-tRNAs (with 1 or more amino acids incorporated), which drop off the ribosome during protein synthesis, or as a result of ribosome stalling. In terms of biological role, catalyzes the release of premature peptidyl moieties from peptidyl-tRNA molecules trapped in stalled 50S ribosomal subunits, and thus maintains levels of free tRNAs and 50S ribosomes. The polypeptide is Peptidyl-tRNA hydrolase (Roseobacter denitrificans (strain ATCC 33942 / OCh 114) (Erythrobacter sp. (strain OCh 114))).